An 878-amino-acid polypeptide reads, in one-letter code: Pyruvate dehydrogenase phosphatase regulatory subunit, mitochondrial (878 aa).

The N-terminal 93 residues, 1–93 (MLYRLLSIVQ…CAGILSTARH (93 aa)), are a transit peptide targeting the mitochondrion.

This sequence belongs to the GcvT family. Heterodimer of a catalytic (PDP1) and a regulatory (PDPR) subunit.

The protein localises to the mitochondrion matrix. Its function is as follows. Decreases the sensitivity of PDP1 to magnesium ions, and this inhibition is reversed by the polyamine spermine. This Mus musculus (Mouse) protein is Pyruvate dehydrogenase phosphatase regulatory subunit, mitochondrial (Pdpr).